Reading from the N-terminus, the 385-residue chain is T-box transcription factor TBX10 (385 aa).

The T-box DNA-binding region spans 69 to 252 (LEMKPLWEEF…SNPFAKGFRE (184 aa)). Disordered stretches follow at residues 283–310 (GSAEREKDTSKASASSSRTPTQPHNQLL) and 328–359 (QNLYPGSPSRAGPPRARLAPYPLPNISTAGDQ). A compositionally biased stretch (polar residues) spans 293 to 307 (KASASSSRTPTQPHN). A compositionally biased stretch (low complexity) spans 331-347 (YPGSPSRAGPPRARLAP).

The protein localises to the nucleus. Functionally, probable transcriptional regulator involved in developmental processes. The chain is T-box transcription factor TBX10 (Tbx10) from Mus musculus (Mouse).